The sequence spans 278 residues: MPMGAAERGAGPQSSAAPWAGSEKAAKRGPSKSWYPRAAASDVTCPTGGDGADPKPGPFGGGLALGPAPRGTMNNNFCRALVDRRPLGPPSCMQLGVMPPPRQAPLPPAEPLGNVPFLLYPGPAEPPYYDAYAGVFPYVPFPGAFGVYEYPFEPAFIQKRNERERQRVKCVNEGYARLRGHLPGALAEKRLSKVETLRAAIRYIKYLQELLSSAPDGSTPPASRGLPGTGPCPAPPATPRPDRPGDGEARAPSSLVPESSESSCFSPSPFLESEESWH.

The tract at residues methionine 1–glycine 66 is disordered. Positions alanine 155–leucine 207 constitute a bHLH domain. Positions alanine 214 to histidine 278 are disordered. A compositionally biased stretch (pro residues) spans glycine 230 to proline 239. Over residues arginine 240–alanine 249 the composition is skewed to basic and acidic residues. Over residues proline 252 to leucine 271 the composition is skewed to low complexity.

Interacts with transcription factor TCF3/E12.

It localises to the nucleus. Functionally, transcription factor. Probably binds E-box motifs 5'-CANNTG-3' in complex with transcription factor TCF3/E12. Negatively modulates transcription of target genes such as CDH1/E-cadherin, perhaps by recruiting the PRC2 repressive complex to regulatory elements. Regulates ameloblast development and tooth germ growth, perhaps acting by positively modulating migration of inner enamel epithelium (IEE) cells. Plays a role in enamel formation. This is Achaete-scute homolog 5 (ASCL5) from Homo sapiens (Human).